The chain runs to 270 residues: Putative pyruvate, phosphate dikinase regulatory protein (270 aa).

ADP is bound at residue 149–156 (GVSRTSKT).

Belongs to the pyruvate, phosphate/water dikinase regulatory protein family. PDRP subfamily.

The catalysed reaction is N(tele)-phospho-L-histidyl/L-threonyl-[pyruvate, phosphate dikinase] + ADP = N(tele)-phospho-L-histidyl/O-phospho-L-threonyl-[pyruvate, phosphate dikinase] + AMP + H(+). It carries out the reaction N(tele)-phospho-L-histidyl/O-phospho-L-threonyl-[pyruvate, phosphate dikinase] + phosphate + H(+) = N(tele)-phospho-L-histidyl/L-threonyl-[pyruvate, phosphate dikinase] + diphosphate. Bifunctional serine/threonine kinase and phosphorylase involved in the regulation of the pyruvate, phosphate dikinase (PPDK) by catalyzing its phosphorylation/dephosphorylation. This chain is Putative pyruvate, phosphate dikinase regulatory protein, found in Sphingopyxis alaskensis (strain DSM 13593 / LMG 18877 / RB2256) (Sphingomonas alaskensis).